Here is a 161-residue protein sequence, read N- to C-terminus: Putative 4-hydroxy-4-methyl-2-oxoglutarate aldolase (161 aa).

Substrate-binding positions include 77 to 80 and Arg-99; that span reads GGNL. Asp-100 serves as a coordination point for a divalent metal cation.

The protein belongs to the class II aldolase/RraA-like family. Homotrimer. The cofactor is a divalent metal cation.

The catalysed reaction is 4-hydroxy-4-methyl-2-oxoglutarate = 2 pyruvate. It carries out the reaction oxaloacetate + H(+) = pyruvate + CO2. Functionally, catalyzes the aldol cleavage of 4-hydroxy-4-methyl-2-oxoglutarate (HMG) into 2 molecules of pyruvate. Also contains a secondary oxaloacetate (OAA) decarboxylase activity due to the common pyruvate enolate transition state formed following C-C bond cleavage in the retro-aldol and decarboxylation reactions. The sequence is that of Putative 4-hydroxy-4-methyl-2-oxoglutarate aldolase from Methylococcus capsulatus (strain ATCC 33009 / NCIMB 11132 / Bath).